The sequence spans 141 residues: Superoxide dismutase [Cu-Zn], chloroplastic (141 aa).

Cu cation-binding residues include H33, H35, and H50. C44 and C133 are joined by a disulfide. Zn(2+) is bound by residues H50, H58, H67, and D70. H107 serves as a coordination point for Cu cation.

It belongs to the Cu-Zn superoxide dismutase family. As to quaternary structure, homotetramer. The cofactor is Cu cation. Zn(2+) is required as a cofactor.

Its subcellular location is the plastid. The protein resides in the chloroplast. It catalyses the reaction 2 superoxide + 2 H(+) = H2O2 + O2. Destroys radicals which are normally produced within the cells and which are toxic to biological systems. The sequence is that of Superoxide dismutase [Cu-Zn], chloroplastic (SODCP) from Pinus sylvestris (Scotch pine).